Consider the following 360-residue polypeptide: Alpha-methylacyl-CoA racemase (360 aa).

Residues Arg38, 59 to 62, 83 to 85, Arg91, and 125 to 130 contribute to the substrate site; these read ADLK, GYR, and GHDINY. His126 serves as the catalytic Proton acceptor. The Proton donor role is filled by Asp156.

It belongs to the CoA-transferase III family. Homodimer.

The catalysed reaction is a (2S)-2-methylacyl-CoA = a (2R)-2-methylacyl-CoA. It carries out the reaction (2S)-2-methyltetradecanoyl-CoA = (2R)-2-methyltetradecanoyl-CoA. It catalyses the reaction (2R)-pristanoyl-CoA = (2S)-pristanoyl-CoA. The enzyme catalyses (25S)-3-oxocholest-4-en-26-oyl-CoA = (25R)-3-oxocholest-4-en-26-oyl-CoA. The catalysed reaction is (2S)-ibuprofenoyl-CoA = (2R)-ibuprofenoyl-CoA. Inactivated by N,N-dialkylcarbamoyl-CoA substrate-product analogs. In terms of biological role, catalyzes the epimerization of (2R)- and (2S)-methylacyl-coenzyme A (CoA) thioesters. Accepts as substrates a wide range of alpha-methylacyl-CoAs, including (2R)-2-methylmyristoyl-CoA and (2S)-2-methylmyristoyl-CoA, (2R)-pristanoyl-CoA and (2S)-pristanoyl-CoA, and the cholesterol esters (25R)-3-oxo-cholest-4-en-26-oyl-CoA and (25S)-3-oxo-cholest-4-en-26-oyl-CoA. Can also catalyze the interconversion of the non-physiologic substrates (2R)-ibuprofenoyl-CoA and (2S)-ibuprofenoyl-CoA, which are potential competitive inhibitors of the enzyme. The protein is Alpha-methylacyl-CoA racemase of Mycobacterium tuberculosis (strain ATCC 25618 / H37Rv).